The following is a 64-amino-acid chain: Disintegrin VLO5A (64 aa).

Residues 1-64 form the Disintegrin domain; sequence NSGNPCCDPV…SDCPRNPYKD (64 aa). Intrachain disulfides connect C6–C29, C20–C26, C25–C50, and C38–C57. Residues 42–44 carry the Cell attachment site; atypical (VGD) motif; the sequence is VGD.

The protein belongs to the venom metalloproteinase (M12B) family. P-II subfamily. P-IIe sub-subfamily. Heterodimer with VLO5B; disulfide-linked. As to expression, expressed by the venom gland.

The protein localises to the secreted. In terms of biological role, poor inhibitor of platelet aggregation. The disintegrin inhibits the adhesion of the alpha-4/beta-1 (ITGA4/ITGB1) integrin to VCAM-1. Inhibition on alpha-IIb/beta-3 (ITGA2B/ITGB3) is low. The protein is Disintegrin VLO5A of Macrovipera lebetina obtusa (Levant blunt-nosed viper).